A 562-amino-acid chain; its full sequence is 2-hydroxyisobutanoyl-CoA mutase large subunit (562 aa).

(3S)-3-hydroxybutanoyl-CoA contacts are provided by residues 76 to 79 (YPTM), 86 to 88 (TMR), Asp-117, 196 to 198 (TVQ), Arg-235, Asn-240, His-245, and Arg-284.

Belongs to the acyl-CoA mutase large subunit family. Homotetramer composed of two large substrate-binding subunits (HcmA) and two small cobalamin-binding subunits (HcmB).

The catalysed reaction is 2-hydroxyisobutanoyl-CoA = (3S)-3-hydroxybutanoyl-CoA. In terms of biological role, together with HcmB, catalyzes the isomerization of 2-hydroxyisobutyryl-CoA and 3-hydroxybutyryl-CoA. Is specific for 2-hydroxyisobutyryl-CoA and (S)-3-hydroxybutyryl-CoA, and shows only very low activity with (R)-3-hydroxybutyryl-CoA, isobutyryl-CoA and butyryl-CoA. In vitro, can isomerize pivalyl-CoA and isovaleryl-CoA, with much lower efficiency. Plays a central role in the degradation of substrates bearing a tert-butyl moiety, such as the fuel oxygenate methyl tert-butyl ether (MTBE) and its metabolites. This is 2-hydroxyisobutanoyl-CoA mutase large subunit from Aquincola tertiaricarbonis.